Here is a 313-residue protein sequence, read N- to C-terminus: Ribosomal RNA small subunit methyltransferase H (313 aa).

Residues 35-37 (GGH), Asp-55, Phe-80, Asp-102, and Gln-109 contribute to the S-adenosyl-L-methionine site.

Belongs to the methyltransferase superfamily. RsmH family.

The protein resides in the cytoplasm. The catalysed reaction is cytidine(1402) in 16S rRNA + S-adenosyl-L-methionine = N(4)-methylcytidine(1402) in 16S rRNA + S-adenosyl-L-homocysteine + H(+). Its function is as follows. Specifically methylates the N4 position of cytidine in position 1402 (C1402) of 16S rRNA. This Shewanella sp. (strain MR-4) protein is Ribosomal RNA small subunit methyltransferase H.